A 335-amino-acid chain; its full sequence is MHTAYIPVPTPVRPPSAERWPLAAVAELFELPFLDLLHRAQQVHRQHFDANTVQLSSLLSIKTGGCPEDCAYCPQSAHYDTGVDADKLMPLDEVVRAARAAQANGAQRFCMGAAWRSPKPHHLEAVAEMIGAVKALGMETCVTLGMLRDGQAEQLKAAGLDYYNHNLDTAPEFYGKIISTRTYQDRLDTLQQVREAGINVCCGGIVGMGESRRDRAGLVAQLANMEPYPESVPINNLVQVEGTPLAGAETLDPFEFIRTIAVARITMPLAKVRLSAGRETMSDSEQALCFMAGANSIFYGDVLLTTGNPQVEADRRLLQRLGMRAEGLPCAAGQA.

Positions 51-278 (NTVQLSSLLS…LAKVRLSAGR (228 aa)) constitute a Radical SAM core domain. [4Fe-4S] cluster is bound by residues Cys-66, Cys-70, and Cys-73. Residues Cys-110, Cys-141, Cys-201, and Arg-273 each contribute to the [2Fe-2S] cluster site.

Belongs to the radical SAM superfamily. Biotin synthase family. As to quaternary structure, homodimer. The cofactor is [4Fe-4S] cluster. [2Fe-2S] cluster is required as a cofactor.

It catalyses the reaction (4R,5S)-dethiobiotin + (sulfur carrier)-SH + 2 reduced [2Fe-2S]-[ferredoxin] + 2 S-adenosyl-L-methionine = (sulfur carrier)-H + biotin + 2 5'-deoxyadenosine + 2 L-methionine + 2 oxidized [2Fe-2S]-[ferredoxin]. It functions in the pathway cofactor biosynthesis; biotin biosynthesis; biotin from 7,8-diaminononanoate: step 2/2. Functionally, catalyzes the conversion of dethiobiotin (DTB) to biotin by the insertion of a sulfur atom into dethiobiotin via a radical-based mechanism. This Bordetella bronchiseptica (strain ATCC BAA-588 / NCTC 13252 / RB50) (Alcaligenes bronchisepticus) protein is Biotin synthase.